We begin with the raw amino-acid sequence, 248 residues long: uncharacterized protein (248 aa).

The next 6 membrane-spanning stretches (helical) occupy residues 65-85, 105-125, 126-146, 156-176, 188-208, and 222-242; these read IIIY…QFLT, SITS…ILWY, ISWT…LGFI, LCCF…TLLI, LILN…SDYS, and VIYI…YKYT.

It is found in the cell membrane. This is an uncharacterized protein from Rickettsia prowazekii (strain Madrid E).